Reading from the N-terminus, the 545-residue chain is Cryptochrome-1 (545 aa).

Residues 3–138 (VNNILWFRHG…KCVEKVSHTL (136 aa)) form the Photolyase/cryptochrome alpha/beta domain. FAD is bound by residues Arg-236, Ser-264, Ser-266, Gln-307, His-374, 406-408 (DAD), Cys-412, and Asn-415.

The protein belongs to the DNA photolyase class-1 family. In terms of assembly, interacts with tim and per; promoted by light conditions. FAD is required as a cofactor.

The protein resides in the cytoplasm. It is found in the perinuclear region. It localises to the nucleus. Functionally, blue light-dependent regulator that is the input of the circadian feedback loop. Has no photolyase activity for cyclobutane pyrimidine dimers or 6-4 photoproducts. Regulation of expression by light suggests a role in photoreception for locomotor activity rhythms. Functions, together with per, as a transcriptional repressor required for the oscillation of peripheral circadian clocks and for the correct specification of clock cells. Genes directly activated by the transcription factors Clock (Clk) and cycle (cyc) are repressed by cry. This is Cryptochrome-1 from Aedes aegypti (Yellowfever mosquito).